A 437-amino-acid polypeptide reads, in one-letter code: Phosphomethylpyrimidine synthase (437 aa).

Substrate-binding positions include Asn-69, Met-98, Tyr-127, His-163, 185 to 187, 226 to 229, and Glu-265; these read SRG and DACR. Position 269 (His-269) interacts with Zn(2+). Tyr-292 is a substrate binding site. His-333 provides a ligand contact to Zn(2+). [4Fe-4S] cluster contacts are provided by Cys-409, Cys-412, and Cys-416.

The protein belongs to the ThiC family. It depends on [4Fe-4S] cluster as a cofactor.

It catalyses the reaction 5-amino-1-(5-phospho-beta-D-ribosyl)imidazole + S-adenosyl-L-methionine = 4-amino-2-methyl-5-(phosphooxymethyl)pyrimidine + CO + 5'-deoxyadenosine + formate + L-methionine + 3 H(+). It participates in cofactor biosynthesis; thiamine diphosphate biosynthesis. Its function is as follows. Catalyzes the synthesis of the hydroxymethylpyrimidine phosphate (HMP-P) moiety of thiamine from aminoimidazole ribotide (AIR) in a radical S-adenosyl-L-methionine (SAM)-dependent reaction. The protein is Phosphomethylpyrimidine synthase of Alkaliphilus metalliredigens (strain QYMF).